A 265-amino-acid chain; its full sequence is tRNA pseudouridine synthase A (265 aa).

Catalysis depends on Asp-53, which acts as the Nucleophile. Tyr-111 is a binding site for substrate.

It belongs to the tRNA pseudouridine synthase TruA family. Homodimer.

It carries out the reaction uridine(38/39/40) in tRNA = pseudouridine(38/39/40) in tRNA. In terms of biological role, formation of pseudouridine at positions 38, 39 and 40 in the anticodon stem and loop of transfer RNAs. The sequence is that of tRNA pseudouridine synthase A from Acinetobacter baumannii (strain SDF).